The sequence spans 94 residues: Integration host factor subunit beta (94 aa).

This sequence belongs to the bacterial histone-like protein family. In terms of assembly, heterodimer of an alpha and a beta chain.

Functionally, this protein is one of the two subunits of integration host factor, a specific DNA-binding protein that functions in genetic recombination as well as in transcriptional and translational control. This Roseobacter denitrificans (strain ATCC 33942 / OCh 114) (Erythrobacter sp. (strain OCh 114)) protein is Integration host factor subunit beta.